The primary structure comprises 527 residues: Tyrosine-protein kinase TXK (527 aa).

Positions 58–81 (TQSNRGGVQPSKRKPLPPLPQEPP) are disordered. Positions 82 to 142 (DERIQVKALY…PSNYVTENRL (61 aa)) constitute an SH3 domain. Phosphotyrosine; by autocatalysis is present on Tyr91. The SH2 domain maps to 150–246 (WYHKNITRNQ…GLISRLRYPI (97 aa)). Residues 271–527 (LAFVKEIGSG…QVLTEIAETW (257 aa)) enclose the Protein kinase domain. ATP is bound by residues 277–285 (IGSGQFGVV) and Lys299. The Proton acceptor role is filled by Asp390. Tyr420 bears the Phosphotyrosine; by FYN and autocatalysis mark.

It belongs to the protein kinase superfamily. Tyr protein kinase family. TEC subfamily. As to quaternary structure, interacts with PARP1 and EEF1A1. Interacts with SH2D2A. Interacts with FYN. In terms of processing, phosphorylated at Tyr-420 by FYN. Autophosphorylation at Tyr-91 is critical for the activation of TXK, leading to the up-regulation of IFN-gamma gene transcription. The cysteine string at the N-terminus is palmitoylated and required for the proper subcellular location. Expressed in early thymocytes, T-cells and mast cells.

It is found in the cytoplasm. Its subcellular location is the nucleus. The protein localises to the cell membrane. The enzyme catalyses L-tyrosyl-[protein] + ATP = O-phospho-L-tyrosyl-[protein] + ADP + H(+). Activated by phosphorylation by FYN. In terms of biological role, non-receptor tyrosine kinase that plays a redundant role with ITK in regulation of the adaptive immune response. Regulates the development, function and differentiation of conventional T-cells and nonconventional NKT-cells. When antigen presenting cells (APC) activate T-cell receptor (TCR), a series of phosphorylation leads to the recruitment of TXK to the cell membrane, where it is phosphorylated at Tyr-420. Phosphorylation leads to TXK full activation. Also contributes to signaling from many receptors and participates in multiple downstream pathways, including regulation of the actin cytoskeleton. Like ITK, can phosphorylate PLCG1, leading to its localization in lipid rafts and activation, followed by subsequent cleavage of its substrates. In turn, the endoplasmic reticulum releases calcium in the cytoplasm and the nuclear activator of activated T-cells (NFAT) translocates into the nucleus to perform its transcriptional duty. Plays a role in the positive regulation of IFNG transcription in T-helper 1 cells as part of an IFNG promoter-binding complex with PARP1 and EEF1A1. Within the complex, phosphorylates both PARP1 and EEF1A1. Also phosphorylates key sites in LCP2 leading to the up-regulation of Th1 preferred cytokine IL-2. Phosphorylates 'Tyr-201' of CTLA4 which leads to the association of PI-3 kinase with the CTLA4 receptor. In Mus musculus (Mouse), this protein is Tyrosine-protein kinase TXK (Txk).